The chain runs to 421 residues: Histidine--tRNA ligase (421 aa).

It belongs to the class-II aminoacyl-tRNA synthetase family. In terms of assembly, homodimer.

The protein localises to the cytoplasm. It catalyses the reaction tRNA(His) + L-histidine + ATP = L-histidyl-tRNA(His) + AMP + diphosphate + H(+). The chain is Histidine--tRNA ligase from Francisella tularensis subsp. holarctica (strain LVS).